The following is a 490-amino-acid chain: Transmembrane protein 185-like (490 aa).

The segment covering 1 to 31 (MIENENTSLLSTSSSSTSSSPNNANSPSSLN) has biased composition (low complexity). Disordered regions lie at residues 1 to 151 (MIEN…SKYK) and 455 to 490 (NMIN…ISNL). Over residues 47–59 (TSGNNSPSAQITK) the composition is skewed to polar residues. 2 stretches are compositionally biased toward low complexity: residues 66–80 (SNNS…NSRS) and 89–108 (NNNN…NNIN). Positions 109–125 (KHNSIVYNKSNNKLNSI) are enriched in polar residues. Residues 133–145 (QGGGGGNGNGNGN) are compositionally biased toward gly residues. The segment covering 463–472 (SESESDDETE) has biased composition (acidic residues).

It belongs to the TMEM185 family.

In Dictyostelium discoideum (Social amoeba), this protein is Transmembrane protein 185-like.